Here is a 454-residue protein sequence, read N- to C-terminus: Transmembrane protein adipocyte-associated 1 homolog (454 aa).

N-linked (GlcNAc...) asparagine glycosylation is found at Asn-26 and Asn-44. 5 helical membrane passes run 80–100, 113–133, 151–171, 180–200, and 224–244; these read AILI…TSVI, AFTL…VYSM, IIIK…GLLF, ILIA…VQVI, and FVFW…IMCL. Asn-258 carries N-linked (GlcNAc...) asparagine glycosylation. 2 helical membrane-spanning segments follow: residues 262 to 282 and 290 to 310; these read FIYC…AALI and LCFV…IIYF. N-linked (GlcNAc...) asparagine glycosylation is found at Asn-322 and Asn-323. Residues 408-454 are disordered; that stretch reads RTGSDDFAHHRDSMLSEPSTGTTTRHLKGLGPQGSLVFEEDPSSLRL. Residues 410 to 421 are compositionally biased toward basic and acidic residues; the sequence is GSDDFAHHRDSM. The segment covering 445-454 has biased composition (acidic residues); that stretch reads FEEDPSSLRL.

The protein belongs to the UPF0359 family.

Its subcellular location is the membrane. The chain is Transmembrane protein adipocyte-associated 1 homolog (tpra-1) from Caenorhabditis briggsae.